The chain runs to 246 residues: MRIDVLTLFPRMFEGPMGESIIGKAREKQLLELNVSNFRDFSDNKHQTVDDYPYGGGAGMLLKVQPIYDNLKAIEEETNQQPKRVILLDPAGKPFNQKMAEEFSQEEHLVFICGHYEGYDERIRTMVTDEVSLGDYVLTGGELGAMVMIDATVRLLPDVLGNNLSAQTDSHSTGLLEHPQYTRPAIFNDMEVPAVLTNGNHKLIAEWQLKESLRRTFLRRPDMLESVEMTPEMLKLLEEIKQEEQK.

S-adenosyl-L-methionine-binding positions include G114 and 133 to 138; that span reads LGDYVL.

The protein belongs to the RNA methyltransferase TrmD family. As to quaternary structure, homodimer.

The protein resides in the cytoplasm. The enzyme catalyses guanosine(37) in tRNA + S-adenosyl-L-methionine = N(1)-methylguanosine(37) in tRNA + S-adenosyl-L-homocysteine + H(+). Functionally, specifically methylates guanosine-37 in various tRNAs. This chain is tRNA (guanine-N(1)-)-methyltransferase, found in Enterococcus faecalis (strain ATCC 700802 / V583).